Here is a 146-residue protein sequence, read N- to C-terminus: MFHRPALQVFRQFARCQSTDSVILERSINKVQLLGRVGQDPVMRQAEGKNPVTIFSLATNELWRSGESETFHTAGDVNQKTTWHRISVFRPGLRDVAYQHVKKGARLLVEGKIDYGEYTDKNNVRRQATTIIADNIIFLSDLRDKL.

The transit peptide at 1–17 directs the protein to the mitochondrion; sequence MFHRPALQVFRQFARCQ. Residues 28–140 enclose the SSB domain; it reads INKVQLLGRV…IIADNIIFLS (113 aa).

As to quaternary structure, homotetramer.

Its subcellular location is the mitochondrion. The protein localises to the mitochondrion matrix. It is found in the mitochondrion nucleoid. Its function is as follows. Binds preferentially and cooperatively to pyrimidine rich single-stranded DNA (ss-DNA). Required to maintain the copy number of mitochondrial DNA (mtDNA) and plays crucial roles during mtDNA replication that stimulate activity of the DNA polymerase at the replication fork. May also function in mtDNA repair. This Xenopus laevis (African clawed frog) protein is Single-stranded DNA-binding protein 1-A, mitochondrial (ssbp1-a).